The primary structure comprises 476 residues: Angiotensinogen (476 aa).

The first 24 residues, 1–24 (MAPAGVSLRATILCLVAWAGLAAG), serve as a signal peptide directing secretion. 4 N-linked (GlcNAc...) asparagine glycosylation sites follow: asparagine 38, asparagine 161, asparagine 295, and asparagine 319. A disulfide bridge connects residues cysteine 42 and cysteine 162.

This sequence belongs to the serpin family. In terms of processing, in response to low blood pressure, the enzyme renin/REN cleaves angiotensinogen to produce angiotensin-1. Angiotensin-1 is a substrate of ACE (angiotensin converting enzyme) that removes a dipeptide to yield the physiologically active peptide angiotensin-2. Angiotensin-1 and angiotensin-2 can be further processed to generate angiotensin-3, angiotensin-4. Angiotensin 1-9 is cleaved from angiotensin-1 by ACE2 and can be further processed by ACE to produce angiotensin 1-7, angiotensin 1-5 and angiotensin 1-4. Angiotensin 1-7 has also been proposed to be cleaved from angiotensin-2 by ACE2 or from angiotensin-1 by MME (neprilysin). Post-translationally, the disulfide bond is labile. Angiotensinogen is present in the circulation in a near 40:60 ratio with the oxidized disulfide-bonded form, which preferentially interacts with receptor-bound renin.

The protein localises to the secreted. Functionally, essential component of the renin-angiotensin system (RAS), a potent regulator of blood pressure, body fluid and electrolyte homeostasis. Its function is as follows. Acts directly on vascular smooth muscle as a potent vasoconstrictor, affects cardiac contractility and heart rate through its action on the sympathetic nervous system, and alters renal sodium and water absorption through its ability to stimulate the zona glomerulosa cells of the adrenal cortex to synthesize and secrete aldosterone. Acts by binding to angiotensin receptors AGTR1 and AGTR2. Also binds the DEAR/FBXW7-AS1 receptor. In terms of biological role, stimulates aldosterone release. Is a ligand for the G-protein coupled receptor MAS1. Has vasodilator and antidiuretic effects. Has an antithrombotic effect that involves MAS1-mediated release of nitric oxide from platelets. This chain is Angiotensinogen (AGT), found in Pan troglodytes (Chimpanzee).